Here is a 497-residue protein sequence, read N- to C-terminus: NADH-ubiquinone oxidoreductase chain 4 (497 aa).

The next 14 membrane-spanning stretches (helical) occupy residues 3–23 (FLLYYTLFISFMLWLAALLII), 42–62 (LFFSFFQFILIIFFWILSDNI), 94–114 (ISLLFLLLTFFLTPICILISW), 122–142 (NSFIICLIFITFILFNIFCVL), 144–164 (LVFFYIFFESILIPMFILIGV), 178–198 (LFFYTLLGSLLMLLGILVIYS), 220–240 (ILWASFFFAFCVKVPLFPFHI), 250–270 (PTVGSVILAGVLLKLGTYGLL), 276–296 (IFCDATYFFLPLVYTLCLLGI), 313–333 (IAYASVSHMSFVILGLFTSNI), 340–360 (VFLMLSHGIVSSGLFFCIGCV), 374–394 (GLVSTMPIFSLCLFILILSNI), 418–438 (FAALIATFSIILTAVYSIWLY), and 463–483 (VVGFIFCFITILFGLKGSYII).

It belongs to the complex I subunit 4 family.

The protein resides in the mitochondrion membrane. It carries out the reaction a ubiquinone + NADH + 5 H(+)(in) = a ubiquinol + NAD(+) + 4 H(+)(out). Core subunit of the mitochondrial membrane respiratory chain NADH dehydrogenase (Complex I) that is believed to belong to the minimal assembly required for catalysis. Complex I functions in the transfer of electrons from NADH to the respiratory chain. The immediate electron acceptor for the enzyme is believed to be ubiquinone. This chain is NADH-ubiquinone oxidoreductase chain 4 (ND4), found in Acanthamoeba castellanii (Amoeba).